Reading from the N-terminus, the 72-residue chain is Large ribosomal subunit protein uL29 (72 aa).

Belongs to the universal ribosomal protein uL29 family. In terms of assembly, part of the 50S ribosomal subunit.

In Pyrococcus furiosus (strain ATCC 43587 / DSM 3638 / JCM 8422 / Vc1), this protein is Large ribosomal subunit protein uL29.